Here is a 456-residue protein sequence, read N- to C-terminus: ATP synthase subunit beta 1 (456 aa).

152–159 (GGAGVGKS) is a binding site for ATP.

The protein belongs to the ATPase alpha/beta chains family. In terms of assembly, F-type ATPases have 2 components, CF(1) - the catalytic core - and CF(0) - the membrane proton channel. CF(1) has five subunits: alpha(3), beta(3), gamma(1), delta(1), epsilon(1). CF(0) has three main subunits: a(1), b(2) and c(9-12). The alpha and beta chains form an alternating ring which encloses part of the gamma chain. CF(1) is attached to CF(0) by a central stalk formed by the gamma and epsilon chains, while a peripheral stalk is formed by the delta and b chains.

The protein localises to the cell membrane. It catalyses the reaction ATP + H2O + 4 H(+)(in) = ADP + phosphate + 5 H(+)(out). In terms of biological role, produces ATP from ADP in the presence of a proton gradient across the membrane. The catalytic sites are hosted primarily by the beta subunits. The sequence is that of ATP synthase subunit beta 1 from Listeria innocua serovar 6a (strain ATCC BAA-680 / CLIP 11262).